We begin with the raw amino-acid sequence, 292 residues long: 4-diphosphocytidyl-2-C-methyl-D-erythritol kinase (292 aa).

The active site involves lysine 13. An ATP-binding site is contributed by 97–107 (PVAAGLAGGSS). The active site involves aspartate 139.

The protein belongs to the GHMP kinase family. IspE subfamily.

It catalyses the reaction 4-CDP-2-C-methyl-D-erythritol + ATP = 4-CDP-2-C-methyl-D-erythritol 2-phosphate + ADP + H(+). It participates in isoprenoid biosynthesis; isopentenyl diphosphate biosynthesis via DXP pathway; isopentenyl diphosphate from 1-deoxy-D-xylulose 5-phosphate: step 3/6. Catalyzes the phosphorylation of the position 2 hydroxy group of 4-diphosphocytidyl-2C-methyl-D-erythritol. The polypeptide is 4-diphosphocytidyl-2-C-methyl-D-erythritol kinase (Bacillus thuringiensis (strain Al Hakam)).